Consider the following 261-residue polypeptide: GTP cyclohydrolase FolE2 (261 aa).

Belongs to the GTP cyclohydrolase IV family.

The enzyme catalyses GTP + H2O = 7,8-dihydroneopterin 3'-triphosphate + formate + H(+). It functions in the pathway cofactor biosynthesis; 7,8-dihydroneopterin triphosphate biosynthesis; 7,8-dihydroneopterin triphosphate from GTP: step 1/1. Its function is as follows. Converts GTP to 7,8-dihydroneopterin triphosphate. This chain is GTP cyclohydrolase FolE2, found in Geobacter metallireducens (strain ATCC 53774 / DSM 7210 / GS-15).